The primary structure comprises 210 residues: Stress-response A/B barrel domain-containing protein DABB1 (210 aa).

2 Stress-response A/B barrel domains span residues Val5–Trp100 and Ile116–Phe204.

As to quaternary structure, homodimer.

Its subcellular location is the cytoplasm. The protein resides in the cytosol. In terms of biological role, involved in defense against fungal pathogens. Possesses antifungal activity against diverse pathogenic fungi. The protein is Stress-response A/B barrel domain-containing protein DABB1 of Arabidopsis thaliana (Mouse-ear cress).